The sequence spans 248 residues: Triosephosphate isomerase (248 aa).

9–11 provides a ligand contact to substrate; it reads NWK. Catalysis depends on H94, which acts as the Electrophile. The active-site Proton acceptor is the E166. Residues G172, S212, and 233–234 each bind substrate; that span reads GG.

It belongs to the triosephosphate isomerase family. Homodimer.

The protein resides in the cytoplasm. It catalyses the reaction D-glyceraldehyde 3-phosphate = dihydroxyacetone phosphate. Its pathway is carbohydrate biosynthesis; gluconeogenesis. It participates in carbohydrate degradation; glycolysis; D-glyceraldehyde 3-phosphate from glycerone phosphate: step 1/1. Its function is as follows. Involved in the gluconeogenesis. Catalyzes stereospecifically the conversion of dihydroxyacetone phosphate (DHAP) to D-glyceraldehyde-3-phosphate (G3P). The sequence is that of Triosephosphate isomerase from Clostridium botulinum (strain Langeland / NCTC 10281 / Type F).